A 131-amino-acid chain; its full sequence is UPF0382 inner membrane protein YgdD (131 aa).

Residues 1–4 (MTSR) lie on the Periplasmic side of the membrane. A helical transmembrane segment spans residues 5 to 25 (FMLIFAAISGFIFVALGAFGA). Over 26 to 64 (HVLSKTMGAVEMGWIQTGLEYQAFHTLAILGLAVAMQRR) the chain is Cytoplasmic. Residues 65-85 (ISIWFYWSSVFLALGTVLFSG) form a helical membrane-spanning segment. Topologically, residues 86–97 (SLYCLALSHLRL) are periplasmic. Residues 98-118 (WAFVTPVGGVSFLAGWALMLV) traverse the membrane as a helical segment. Over 119 to 131 (GAIRLKRKGVSHE) the chain is Cytoplasmic.

Belongs to the UPF0382 family.

The protein localises to the cell inner membrane. This is UPF0382 inner membrane protein YgdD (ygdD) from Escherichia coli O157:H7.